We begin with the raw amino-acid sequence, 84 residues long: uncharacterized protein (84 aa).

Residues 7–62 form the HTH cro/C1-type domain; sequence IDVMLAKRKMSVTELSERVGITMANLSILKNGKAKAIRLSTLEAICKALECQPGDI. The H-T-H motif DNA-binding region spans 18–37; that stretch reads VTELSERVGITMANLSILKN.

This is an uncharacterized protein from Bacillus subtilis (strain 168).